A 197-amino-acid polypeptide reads, in one-letter code: Large ribosomal subunit protein eL15 (197 aa).

The tract at residues 175–197 (LRTGRKGSSKSRPSIRANGRLRR) is disordered.

This sequence belongs to the eukaryotic ribosomal protein eL15 family.

This chain is Large ribosomal subunit protein eL15 (rpl15e), found in Thermoplasma volcanium (strain ATCC 51530 / DSM 4299 / JCM 9571 / NBRC 15438 / GSS1).